Here is a 433-residue protein sequence, read N- to C-terminus: Mg(2+)/citrate complex secondary transporter (433 aa).

A run of 12 helical transmembrane segments spans residues leucine 2–leucine 22, valine 24–threonine 44, threonine 60–phenylalanine 80, isoleucine 98–threonine 118, leucine 131–methionine 151, glycine 176–leucine 196, valine 247–valine 267, valine 286–threonine 306, methionine 324–proline 344, asparagine 345–valine 365, proline 379–valine 399, and tryptophan 411–isoleucine 431.

The protein belongs to the CitM (TC 2.A.11) transporter family.

It localises to the cell membrane. The uptake activity increases with increasing Mg(2+) concentrations. Inhibited by FCCP, TCC and nigericin. Proton motive force-driven secondary transporter that mediates the transport of citrate complexed to Mg(2+). Cotransports at least two protons per Mg(2+)-citrate complex. Can also transport citrate in complex with Ni(2+), Mn(2+), Co(2+), and Zn(2+). This is Mg(2+)/citrate complex secondary transporter (citM) from Bacillus subtilis (strain 168).